A 229-amino-acid chain; its full sequence is Potassium/proton antiporter CemA (229 aa).

A run of 4 helical transmembrane segments spans residues leucine 7–phenylalanine 27, isoleucine 114–leucine 134, isoleucine 154–isoleucine 174, and isoleucine 189–isoleucine 209.

It belongs to the CemA family.

It localises to the plastid. It is found in the chloroplast inner membrane. The enzyme catalyses K(+)(in) + H(+)(out) = K(+)(out) + H(+)(in). In terms of biological role, contributes to K(+)/H(+) antiport activity by supporting proton efflux to control proton extrusion and homeostasis in chloroplasts in a light-dependent manner to modulate photosynthesis. Prevents excessive induction of non-photochemical quenching (NPQ) under continuous-light conditions. Indirectly promotes efficient inorganic carbon uptake into chloroplasts. The polypeptide is Potassium/proton antiporter CemA (Fagus sylvatica (Beechnut)).